The sequence spans 72 residues: Translation initiation factor IF-1 (72 aa).

One can recognise an S1-like domain in the interval 1–72 (MSKEDMIEFS…SKGRITFRFK (72 aa)).

The protein belongs to the IF-1 family. In terms of assembly, component of the 30S ribosomal translation pre-initiation complex which assembles on the 30S ribosome in the order IF-2 and IF-3, IF-1 and N-formylmethionyl-tRNA(fMet); mRNA recruitment can occur at any time during PIC assembly.

It localises to the cytoplasm. One of the essential components for the initiation of protein synthesis. Stabilizes the binding of IF-2 and IF-3 on the 30S subunit to which N-formylmethionyl-tRNA(fMet) subsequently binds. Helps modulate mRNA selection, yielding the 30S pre-initiation complex (PIC). Upon addition of the 50S ribosomal subunit IF-1, IF-2 and IF-3 are released leaving the mature 70S translation initiation complex. This chain is Translation initiation factor IF-1, found in Gluconacetobacter diazotrophicus (strain ATCC 49037 / DSM 5601 / CCUG 37298 / CIP 103539 / LMG 7603 / PAl5).